The following is a 414-amino-acid chain: Putative transporter AmpG 4 (414 aa).

12 helical membrane-spanning segments follow: residues 15 to 35 (IFILGIVSGMPLVIIFSTLSV), 44 to 63 (IAVITTFAVARLSYSLKVFW), 84 to 104 (WLILCSSLMVLVLIAMSKENP), 109 to 129 (TSLYFLTIALGFLSSTFDIAV), 150 to 170 (VFGYRIGMLITGAGALYLAEI), 177 to 197 (LTFVIIAIIFAVATIFIITVN), 230 to 250 (FAVTILLAVIFFKLGDAMLGA), 268 to 288 (IIAKLYGLIATLVGGFAGGIV), 295 to 315 (FKGLIITGIAQSLTHFAFIWL), 324 to 344 (ALLIAITIENFAAAMGATALV), 360 to 379 (YALLSSSSSLCNNTVTIYAG), and 389 to 409 (GFFIFTIILALPALFILMYLN).

This sequence belongs to the major facilitator superfamily.

The protein resides in the cell inner membrane. In Rickettsia felis (strain ATCC VR-1525 / URRWXCal2) (Rickettsia azadi), this protein is Putative transporter AmpG 4 (ampG4).